A 106-amino-acid polypeptide reads, in one-letter code: Ferredoxin-2 (106 aa).

4Fe-4S ferredoxin-type domains lie at 2–29 (YVVT…YEGE) and 30–59 (NFLV…GKWL). Cys8 and Cys16 together coordinate [3Fe-4S] cluster. Residues Cys20, Cys39, Cys42, and Cys45 each contribute to the [4Fe-4S] cluster site. A [3Fe-4S] cluster-binding site is contributed by Cys49. The tract at residues 80 to 106 (ADADDWKDKPDKTGLLSENPGKGTVCH) is disordered.

[4Fe-4S] cluster is required as a cofactor. Requires [3Fe-4S] cluster as cofactor.

Functionally, ferredoxins are iron-sulfur proteins that transfer electrons in a wide variety of metabolic reactions. The polypeptide is Ferredoxin-2 (Rhodospirillum rubrum).